A 144-amino-acid polypeptide reads, in one-letter code: Large ribosomal subunit protein uL11 (144 aa).

This sequence belongs to the universal ribosomal protein uL11 family. In terms of assembly, part of the ribosomal stalk of the 50S ribosomal subunit. Interacts with L10 and the large rRNA to form the base of the stalk. L10 forms an elongated spine to which L12 dimers bind in a sequential fashion forming a multimeric L10(L12)X complex. In terms of processing, one or more lysine residues are methylated.

Functionally, forms part of the ribosomal stalk which helps the ribosome interact with GTP-bound translation factors. This is Large ribosomal subunit protein uL11 from Corynebacterium glutamicum (strain R).